We begin with the raw amino-acid sequence, 273 residues long: Octanoyltransferase LipM (273 aa).

The 209-residue stretch at 32 to 240 (GEIPPTLRFY…GFSEILNIEL (209 aa)) folds into the BPL/LPL catalytic domain. The active-site Acyl-thioester intermediate is cysteine 142.

The protein belongs to the octanoyltransferase LipM family. Monomer.

The catalysed reaction is octanoyl-[ACP] + L-lysyl-[protein] = N(6)-octanoyl-L-lysyl-[protein] + holo-[ACP] + H(+). Its pathway is protein modification; protein lipoylation via endogenous pathway; protein N(6)-(lipoyl)lysine from octanoyl-[acyl-carrier-protein]. In terms of biological role, catalyzes the transfer of endogenously produced octanoic acid from octanoyl-acyl-carrier-protein onto the lipoyl domain of GcvH, an intermediate carrier during protein lipoylation. This chain is Octanoyltransferase LipM, found in Oceanobacillus iheyensis (strain DSM 14371 / CIP 107618 / JCM 11309 / KCTC 3954 / HTE831).